A 251-amino-acid polypeptide reads, in one-letter code: Gamma-interferon-inducible lysosomal thiol reductase (251 aa).

Residues 1–21 form the signal peptide; sequence MFGFRLSVLLFAVCSLSACSC. The region spanning 22–60 is the Saposin A-type domain; it reads MFVNSCKYPPSQWCDSRDIAAQCGVLEQCMKFNASPVTV. Cysteines 68 and 71 form a disulfide. N108 is a glycosylation site (N-linked (GlcNAc...) asparagine).

It belongs to the GILT family. Dimer; disulfide-linked. Highly expressed in spleen and kidney. Also detected at lower levels in liver, heart, brain, intestine and gill.

It is found in the secreted. It localises to the lysosome. Lysosomal thiol reductase that can reduce protein disulfide bonds. May facilitate the complete unfolding of proteins destined for lysosomal degradation. Plays an important role in antigen processing. The protein is Gamma-interferon-inducible lysosomal thiol reductase of Carassius auratus (Goldfish).